Here is a 520-residue protein sequence, read N- to C-terminus: Hydroxymethylglutaryl-CoA synthase, cytoplasmic (520 aa).

At serine 4 the chain carries Phosphoserine. Residues aspartate 43 and alanine 44 each coordinate (3S)-3-hydroxy-3-methylglutaryl-CoA. Residue 44-46 coordinates CoA; sequence AGK. At lysine 46 the chain carries N6-acetyllysine. The active-site Proton donor/acceptor is glutamate 95. (3S)-3-hydroxy-3-methylglutaryl-CoA is bound by residues cysteine 129, asparagine 167, threonine 171, serine 221, and histidine 264. Cysteine 129 functions as the Acyl-thioester intermediate in the catalytic mechanism. Position 167 (asparagine 167) interacts with CoA. Position 221 (serine 221) interacts with CoA. Histidine 264 acts as the Proton donor/acceptor in catalysis. Positions 269 and 273 each coordinate CoA. The (3S)-3-hydroxy-3-methylglutaryl-CoA site is built by lysine 273, asparagine 343, and serine 377. At lysine 273 the chain carries N6-acetyllysine. Residues 486 to 520 form a disordered region; the sequence is SNTATEHIPSPAKKVPRLPATAAESESAVISNGEH. 2 positions are modified to phosphoserine: serine 495 and serine 516.

The protein belongs to the thiolase-like superfamily. HMG-CoA synthase family. As to quaternary structure, homodimer.

The protein localises to the cytoplasm. The enzyme catalyses acetoacetyl-CoA + acetyl-CoA + H2O = (3S)-3-hydroxy-3-methylglutaryl-CoA + CoA + H(+). The protein operates within metabolic intermediate biosynthesis; (R)-mevalonate biosynthesis; (R)-mevalonate from acetyl-CoA: step 2/3. Functionally, this enzyme condenses acetyl-CoA with acetoacetyl-CoA to form HMG-CoA, which is converted by HMG-CoA reductase (HMGCR) into mevalonate, a precursor for cholesterol synthesis. The polypeptide is Hydroxymethylglutaryl-CoA synthase, cytoplasmic (Cricetulus griseus (Chinese hamster)).